Reading from the N-terminus, the 98-residue chain is NADH-ubiquinone oxidoreductase chain 4L (98 aa).

A run of 3 helical transmembrane segments spans residues 1-21, 29-49, and 61-81; these read MTMV…GLLM, SLLC…VTIL, and IILL…LVMV.

It belongs to the complex I subunit 4L family. In terms of assembly, core subunit of respiratory chain NADH dehydrogenase (Complex I) which is composed of 45 different subunits.

It localises to the mitochondrion inner membrane. It catalyses the reaction a ubiquinone + NADH + 5 H(+)(in) = a ubiquinol + NAD(+) + 4 H(+)(out). Its function is as follows. Core subunit of the mitochondrial membrane respiratory chain NADH dehydrogenase (Complex I) which catalyzes electron transfer from NADH through the respiratory chain, using ubiquinone as an electron acceptor. Part of the enzyme membrane arm which is embedded in the lipid bilayer and involved in proton translocation. This Neomonachus schauinslandi (Hawaiian monk seal) protein is NADH-ubiquinone oxidoreductase chain 4L (MT-ND4L).